A 292-amino-acid polypeptide reads, in one-letter code: Phosphotriesterase homology protein (292 aa).

Zn(2+)-binding residues include histidine 12, histidine 14, and glutamate 125. 148–149 contributes to the beta-D-glucose binding site; it reads HN. Histidine 158 contacts Zn(2+). Beta-D-glucose is bound by residues glycine 176, aspartate 178, and arginine 181. Residues histidine 186 and aspartate 243 each contribute to the Zn(2+) site. 2 residues coordinate beta-D-glucose: aspartate 280 and arginine 284.

This sequence belongs to the metallo-dependent hydrolases superfamily. Phosphotriesterase family. As to quaternary structure, monomer. It depends on Zn(2+) as a cofactor.

Activity is higher in the enzyme containing Mn(2+) than that containing Zn(2+). Functionally, catalyzes the hydrolysis of phosphorylated glyceryl acetates in which the presence of a phosphate group is required for the enzymatic hydrolysis. Hydrolyzes a dibutyl glycerol derivative suggesting it acts on phosphoglycerol substrates with a butyrate leaving group. Also active with aromatic acetates and propionates. No activity with various sugar phosphates, with various nitrophenylphosphate or nitrophenylphosphonate derivatives, or with phosphorylated or non-phosphorylated sugar lactones tested. Does not hydrolyze non-phosphorylated carboxyesters with long chain leaving groups. No general esterase, aminopeptidase, sulfatase, phosphatase, carbonic anhydrase, phosphodiesterase, and phosphotriesterase activities detected when tested with the following non-specific substrates: p-nitrophenyl acetate, L-alanine nitroanilide, p-nitrophenyl sulfate, bis(p-nitrophenyl) phosphate, paraoxon, and p-nitrophenyl phosphate. In Escherichia coli (strain K12), this protein is Phosphotriesterase homology protein.